The primary structure comprises 169 residues: Ribosome maturation factor RimM (169 aa).

The region spanning 94–168 is the PRC barrel domain; the sequence is DDEFYHADLI…RIVADPPEGL (75 aa).

The protein belongs to the RimM family. In terms of assembly, binds ribosomal protein uS19.

The protein localises to the cytoplasm. In terms of biological role, an accessory protein needed during the final step in the assembly of 30S ribosomal subunit, possibly for assembly of the head region. Essential for efficient processing of 16S rRNA. May be needed both before and after RbfA during the maturation of 16S rRNA. It has affinity for free ribosomal 30S subunits but not for 70S ribosomes. The protein is Ribosome maturation factor RimM of Cereibacter sphaeroides (strain ATCC 17025 / ATH 2.4.3) (Rhodobacter sphaeroides).